The following is a 422-amino-acid chain: Putative FBD-associated F-box protein At1g55030 (422 aa).

The F-box domain occupies 8-60; the sequence is TDMISQLPEPLILQILGSLPTKVAITTSVLSKQWQSHWKMMPKLEFDSFLRRL. LRR repeat units follow at residues 132-153, 154-175, and 180-201; these read TLETLELILNVVMDVPPSVYLK, SLKTLYLLAVDFKDDESVINLL, and NLQDLVMRRNSSSNVKTFTIAV. The FBD domain maps to 342-391; sequence EWNQPKNVPECLHHLEKFIWEGYKWKREEIEVAKYILKNTNRLKRAIFSL.

The polypeptide is Putative FBD-associated F-box protein At1g55030 (Arabidopsis thaliana (Mouse-ear cress)).